The following is a 32-amino-acid chain: ANIQSFSFKNFNSPSFILQGDATVSSGKLQLP.

It belongs to the leguminous lectin family. Homotetramer.

Metalloglycoprotein, containing Ca, Mg, Mn, and Zn and the carbohydrates galactose, glucosamine, mannose, and fucose. It agglutinates erythrocytes of blood group A1. This Macrotyloma axillare (Perennial horse gram) protein is Lectin.